We begin with the raw amino-acid sequence, 377 residues long: Secreted LysM effector Lys2 (377 aa).

An N-terminal signal peptide occupies residues 1 to 22 (MVRQSIGLIALQLLNLVSVAQA). Over residues 104 to 119 (TSSSTATTTSQKPTAT) the composition is skewed to low complexity. The tract at residues 104–124 (TSSSTATTTSQKPTATVSPLP) is disordered. LysM domains follow at residues 135 to 182 (KYYN…YVCV) and 207 to 253 (KYYK…YYCV).

Belongs to the secreted LysM effector family.

In terms of biological role, might have a role in sequestration of chitin oligosaccharides (breakdown products of fungal cell walls that are released during invasion and act as triggers of host immunity) to dampen host defense. The sequence is that of Secreted LysM effector Lys2 from Pochonia chlamydosporia (strain 123) (Metacordyceps chlamydosporia).